The primary structure comprises 445 residues: Histone acetyltransferase of the MYST family 2 (445 aa).

Positions 1–23 are enriched in polar residues; it reads MGSSANTETNGNAPPPSSNQKPP. Residues 1–58 form a disordered region; that stretch reads MGSSANTETNGNAPPPSSNQKPPATNGVDGSHPPPPPLTPDQAIIESDPSKKRKMGML. The 59-residue stretch at 60–118 folds into the Tudor-knot domain; it reads LEVGTRVMCRWRDGKHHPVKVIERRRIHNGGQNDYEYYVHYTEFNRRLDEWTQLDQLDL. The MYST-type HAT domain maps to 169–440; that stretch reads TKVKNISTIE…VDASKLIWTP (272 aa). A C2HC MYST-type zinc finger spans residues 202 to 227; it reads LFFCEFCLNFMKRKEQLQRHMRKCDL. At Lys269 the chain carries N6-acetyllysine; by autocatalysis. Residues 312-314 and 319-325 each bind acetyl-CoA; these read ILT and QRKGYGK. The active-site Proton donor/acceptor is the Glu345. Ser349 contacts acetyl-CoA.

It belongs to the MYST (SAS/MOZ) family. As to quaternary structure, interacts with MRG1 and MRG2. Autoacetylation at Lys-269 is required for proper function. Expressed in cotyledons, leaves, stems, roots and, at higher levels in developing flowers, particularly in the anthers and gynoecia. Constitutively expressed in all tissues, predominantly in shoot apical meristem.

It localises to the nucleus. It carries out the reaction L-lysyl-[protein] + acetyl-CoA = N(6)-acetyl-L-lysyl-[protein] + CoA + H(+). Its function is as follows. Histone acetyltransferase which may be involved in transcriptional activation. Acetylates 'Lys-5' of histone H4 (H4K5ac). Essential for gametophyte development. Negative regulator of flowering controlling the H4K5ac levels in the FLC chromatin. This chain is Histone acetyltransferase of the MYST family 2, found in Arabidopsis thaliana (Mouse-ear cress).